Reading from the N-terminus, the 181-residue chain is Akirin-2 (181 aa).

Residues Ser-18–Pro-48 form a disordered region. Positions Pro-23–Cys-28 match the Nuclear localization signal motif. The SYVS motif signature appears at Ser-178–Ser-181.

Belongs to the akirin family. As to quaternary structure, homodimer. Interacts with actl6a/baf53a. Interacts with gmnn.

It localises to the nucleus. Its function is as follows. Molecular adapter that acts as a bridge between a variety of multiprotein complexes, and which is involved in embryonic development, immunity, myogenesis and brain development. Plays a key role in nuclear protein degradation by promoting import of proteasomes into the nucleus: acts by bridging fully assembled 20S proteasomes with nuclear import receptor ipo9. Involved in both neural precursor maintenance and terminal neural differentiation: bridges gmnn and actl6a/baf53a in neural progenitor cells, antagonizing the activity of gmnn, thereby suppressing sox2 expression. Also required for proper activation of neurod1 and neuronal differentiation. Involved in myogenesis: required for skeletal muscle formation and skeletal development, possibly by regulating expression of muscle differentiation factors. The sequence is that of Akirin-2 from Xenopus laevis (African clawed frog).